A 451-amino-acid polypeptide reads, in one-letter code: F-box/kelch-repeat protein At1g74510 (451 aa).

The region spanning 93–139 (SSPVTRLDQNALLNCLAHCSLSDFGSIASTNRTFRSLIKDSELYRLR) is the F-box domain. Kelch repeat units follow at residues 137–188 (RLRR…KESL), 193–236 (ELLV…SLGE), 237–284 (IAVI…FMDG), 286–333 (FYCI…DQAK), and 349–395 (AVVK…GMAF).

This chain is F-box/kelch-repeat protein At1g74510, found in Arabidopsis thaliana (Mouse-ear cress).